The following is a 50-amino-acid chain: uncharacterized protein (50 aa).

This is an uncharacterized protein from Sulfolobus islandicus filamentous virus (isolate Iceland/Hveragerdi) (SIFV).